A 432-amino-acid chain; its full sequence is Glutamate-1-semialdehyde 2,1-aminomutase (432 aa).

Lys270 bears the N6-(pyridoxal phosphate)lysine mark.

It belongs to the class-III pyridoxal-phosphate-dependent aminotransferase family. HemL subfamily. Homodimer. Requires pyridoxal 5'-phosphate as cofactor.

The protein resides in the cytoplasm. The enzyme catalyses (S)-4-amino-5-oxopentanoate = 5-aminolevulinate. It participates in porphyrin-containing compound metabolism; protoporphyrin-IX biosynthesis; 5-aminolevulinate from L-glutamyl-tRNA(Glu): step 2/2. The polypeptide is Glutamate-1-semialdehyde 2,1-aminomutase (Acinetobacter baylyi (strain ATCC 33305 / BD413 / ADP1)).